A 223-amino-acid chain; its full sequence is ATP-dependent Clp protease proteolytic subunit 2 (223 aa).

The disordered stretch occupies residues 1–40 (MHAGSGNDMDITRMTPTRLDDEPDAPEPETREDDNKTLNS). Residues 21–32 (DEPDAPEPETRE) are compositionally biased toward acidic residues. The active-site Nucleophile is Ser-124. His-149 is an active-site residue.

Belongs to the peptidase S14 family. As to quaternary structure, fourteen ClpP subunits assemble into 2 heptameric rings which stack back to back to give a disk-like structure with a central cavity, resembling the structure of eukaryotic proteasomes.

It localises to the cytoplasm. It catalyses the reaction Hydrolysis of proteins to small peptides in the presence of ATP and magnesium. alpha-casein is the usual test substrate. In the absence of ATP, only oligopeptides shorter than five residues are hydrolyzed (such as succinyl-Leu-Tyr-|-NHMec, and Leu-Tyr-Leu-|-Tyr-Trp, in which cleavage of the -Tyr-|-Leu- and -Tyr-|-Trp bonds also occurs).. Functionally, cleaves peptides in various proteins in a process that requires ATP hydrolysis. Has a chymotrypsin-like activity. Plays a major role in the degradation of misfolded proteins. The sequence is that of ATP-dependent Clp protease proteolytic subunit 2 from Gluconobacter oxydans (strain 621H) (Gluconobacter suboxydans).